A 630-amino-acid polypeptide reads, in one-letter code: Probable potassium transport system protein Kup (630 aa).

Helical transmembrane passes span 17 to 37 (LAIA…LYSL), 51 to 71 (PSAI…VVGI), 105 to 125 (ITGL…GDAV), 144 to 164 (PQLS…LFWI), 175 to 195 (LFGP…IYHI), 218 to 238 (VLLA…AEAL), 255 to 275 (YVLV…LLLL), 283 to 303 (PFFL…STVA), 344 to 364 (IYVP…VIGF), 374 to 394 (YGIA…VVMV), 402 to 422 (LLVA…FGAN), and 428 to 448 (QGGW…MTWY).

Belongs to the HAK/KUP transporter (TC 2.A.72) family.

It is found in the cell inner membrane. The enzyme catalyses K(+)(in) + H(+)(in) = K(+)(out) + H(+)(out). Functionally, transport of potassium into the cell. Likely operates as a K(+):H(+) symporter. This Burkholderia pseudomallei (strain 1710b) protein is Probable potassium transport system protein Kup.